Here is a 606-residue protein sequence, read N- to C-terminus: MVVINGYSFKTQQLLTQQPDHSQLTQFVQPQSQSTHSVHPGPSPGQQQAGGSMTMPSSSTGKGKREWDINDAIVPHVPDQEFDEFNEWSDGHVRHIYSLHNEEAKKHISGWAMRNTNNHNVNILKKSCLGVLVCSQHCTLPNGSKINLRPAICDKARRKQEGKACPNKSCRGGRLEIKPCRGHCGYPVTHFWRHSGNAIFFQAKGVHDHLRPDPKNSSVSKRAFGRVPLAGKSANGSVAKKSVIAGLVKQAKQQHSLISKVLKRPAVSNPLAHTALDIYQYNACGKCAGYSHCTCSYLDDSTTARSHQLSQSSNYGTNSWPLSGSESSAPCETAANVFTVNHQHITYNYPIYHATPAAATAAPSKSPSLPYACSISELAAYQQSSSGNSFAMGVPVHGHTQCQAVAYDSSPQLATPEPEFINYSQIKHLGGGGGQEEISCKAEPGPTIKYNATVETQPYVEDNYDYYYSPKAEYEMQQHHHQQQQSHQQFGGNQTAGHHYYESSSGYNGVSYFDTGTTTAPGNTATGNGLEVGYGGYYDHYTSYEQQMAVAGGFATAGGSTAPTVAAPPGHPPPPPPPPTLTYHHHHHHHLHHPAAATGLAPSVTH.

Polar residues predominate over residues 20 to 37 (DHSQLTQFVQPQSQSTHS). Disordered regions lie at residues 20–65 (DHSQ…KGKR), 475–501 (EMQQ…HHYY), and 561–606 (TAPT…SVTH). Residues 44–61 (PGQQQAGGSMTMPSSSTG) are compositionally biased toward low complexity. The GCM DNA-binding region spans 65–224 (REWDINDAIV…KNSSVSKRAF (160 aa)). A compositionally biased stretch (polar residues) spans 490–501 (FGGNQTAGHHYY). Over residues 569-580 (PGHPPPPPPPPT) the composition is skewed to pro residues. Residues 583-593 (YHHHHHHHLHH) are compositionally biased toward basic residues. Positions 594 to 606 (PAAATGLAPSVTH) are enriched in low complexity.

Expressed in glial lineages within embryonic procephalic mesoderm. Expression is highest in hemocyte primordia and longitudinal and nerve root ganglia.

Its subcellular location is the nucleus. Its function is as follows. Transcription factor with a minor role promoting glial cell differentiation and a more significant role in hematocyte differentiation. Gcm2, together with gcm, is required for the proliferation of plasmatocyte precursors, the expression of Croquemort protein, and the ability of plasmatocytes to convert into macrophages. The polypeptide is Transcription factor glial cells missing 2 (gcm2) (Drosophila melanogaster (Fruit fly)).